The sequence spans 150 residues: Large ribosomal subunit protein bL9 (150 aa).

It belongs to the bacterial ribosomal protein bL9 family.

Binds to the 23S rRNA. This Corynebacterium aurimucosum (strain ATCC 700975 / DSM 44827 / CIP 107346 / CN-1) (Corynebacterium nigricans) protein is Large ribosomal subunit protein bL9.